The following is a 650-amino-acid chain: Acetyl-coenzyme A synthetase (650 aa).

CoA-binding positions include 190–193, Thr-308, and Asn-332; that span reads RGGR. ATP is bound by residues 384–386, 408–413, Asp-497, and Arg-512; these read GEP and DTWWQT. Ser-520 provides a ligand contact to CoA. Arg-523 lines the ATP pocket. Val-534, His-536, and Val-539 together coordinate Mg(2+). Position 581 (Arg-581) interacts with CoA. Lys-606 is modified (N6-acetyllysine).

The protein belongs to the ATP-dependent AMP-binding enzyme family. Mg(2+) is required as a cofactor. Acetylated. Deacetylation by the SIR2-homolog deacetylase activates the enzyme.

The catalysed reaction is acetate + ATP + CoA = acetyl-CoA + AMP + diphosphate. Its function is as follows. Catalyzes the conversion of acetate into acetyl-CoA (AcCoA), an essential intermediate at the junction of anabolic and catabolic pathways. AcsA undergoes a two-step reaction. In the first half reaction, AcsA combines acetate with ATP to form acetyl-adenylate (AcAMP) intermediate. In the second half reaction, it can then transfer the acetyl group from AcAMP to the sulfhydryl group of CoA, forming the product AcCoA. This chain is Acetyl-coenzyme A synthetase, found in Bradyrhizobium sp. (strain ORS 278).